Consider the following 478-residue polypeptide: MTRIKINARRIFSLLIPFFFFTSVHAEQTAAPAKPVTVEAKNETFAPQHPDQYLSWKATSEQSERVDALAEDPRLVILWAGYPFSRDYNKPRGHAFAVTDVRETLRTGAPKNAEDGPLPMACWSCKSPDVARLIQKDGEDGYFHGKWARGGPEIVNNLGCADCHNTASPEFAKGKPELTLSRPYAARAMEAIGKPFEKAGRFDQQSMVCGQCHVEYYFDGKNKAVKFPWDDGMKVENMEQYYDKIAFSDWTNSLSKTPMLKAQHPEYETWTAGIHGKNNVTCIDCHMPKVQNAEGKLYTDHKIGNPFDNFAQTCANCHTQDKAALQKVVAERKQSINDLKIKVEDQLVHAHFEAKAALDAGATEAEMKPIQDDIRHAQWRWDLAIASHGIHMHAPEEGLRMLGTAMDKAADARTKLARLLATKGITHEIQIPDISTKEKAQQAIGLNMEQIKAEKQDFIKTVIPQWEEQARKNGLLSQ.

An N-terminal signal peptide occupies residues Met1 to Ala26. Residue His94 participates in heme c binding. Residues Cys122, Cys125, and Lys126 each coordinate heme. Heme c-binding residues include Cys160, Cys163, His164, Cys209, Cys212, and His213. Residues Glu215, Tyr216, Lys261, and Gln263 each contribute to the Ca(2+) site. Tyr216 contributes to the substrate binding site. His264 serves as a coordination point for substrate. The heme c site is built by His275, Cys282, Cys285, His286, His301, Cys314, Cys317, His318, and His393.

The protein belongs to the cytochrome c-552 family. Ca(2+) is required as a cofactor. Heme c serves as cofactor.

It localises to the periplasm. The catalysed reaction is 6 Fe(III)-[cytochrome c] + NH4(+) + 2 H2O = 6 Fe(II)-[cytochrome c] + nitrite + 8 H(+). Its pathway is nitrogen metabolism; nitrate reduction (assimilation). Its function is as follows. Catalyzes the reduction of nitrite to ammonia, consuming six electrons in the process. The sequence is that of Cytochrome c-552 from Escherichia coli (strain ATCC 8739 / DSM 1576 / NBRC 3972 / NCIMB 8545 / WDCM 00012 / Crooks).